We begin with the raw amino-acid sequence, 319 residues long: Acetyl-coenzyme A carboxylase carboxyl transferase subunit alpha (319 aa).

A CoA carboxyltransferase C-terminal domain is found at 35 to 296 (NIDEEVHRLR…KTQLLADLAD (262 aa)).

This sequence belongs to the AccA family. Acetyl-CoA carboxylase is a heterohexamer composed of biotin carboxyl carrier protein (AccB), biotin carboxylase (AccC) and two subunits each of ACCase subunit alpha (AccA) and ACCase subunit beta (AccD).

The protein localises to the cytoplasm. The enzyme catalyses N(6)-carboxybiotinyl-L-lysyl-[protein] + acetyl-CoA = N(6)-biotinyl-L-lysyl-[protein] + malonyl-CoA. Its pathway is lipid metabolism; malonyl-CoA biosynthesis; malonyl-CoA from acetyl-CoA: step 1/1. Component of the acetyl coenzyme A carboxylase (ACC) complex. First, biotin carboxylase catalyzes the carboxylation of biotin on its carrier protein (BCCP) and then the CO(2) group is transferred by the carboxyltransferase to acetyl-CoA to form malonyl-CoA. The sequence is that of Acetyl-coenzyme A carboxylase carboxyl transferase subunit alpha from Cronobacter sakazakii (strain ATCC BAA-894) (Enterobacter sakazakii).